A 456-amino-acid polypeptide reads, in one-letter code: Probable transcription factor At3g04930 (456 aa).

The segment at 1 to 71 is disordered; it reads MTSDHRDALF…LNSPSTSSLP (71 aa). Composition is skewed to acidic residues over residues 15–38 and 50–62; these read ESPD…DLRD and AEAE…EEDL. At Ser-16 the chain carries Phosphoserine.

It belongs to the GeBP family.

The chain is Probable transcription factor At3g04930 from Arabidopsis thaliana (Mouse-ear cress).